The chain runs to 406 residues: Peptidase T (406 aa).

H77 is a Zn(2+) binding site. D79 is a catalytic residue. D139 contacts Zn(2+). The Proton acceptor role is filled by E173. Zn(2+) contacts are provided by E174, D196, and H377.

Belongs to the peptidase M20B family. Zn(2+) serves as cofactor.

It localises to the cytoplasm. The enzyme catalyses Release of the N-terminal residue from a tripeptide.. Cleaves the N-terminal amino acid of tripeptides. The chain is Peptidase T from Parabacteroides distasonis (strain ATCC 8503 / DSM 20701 / CIP 104284 / JCM 5825 / NCTC 11152).